Reading from the N-terminus, the 856-residue chain is PR domain zinc finger protein 1 (856 aa).

The SET domain maps to 115-233 (PRNLLFKYAA…ANQELLVWYC (119 aa)). Disordered stretches follow at residues 357–399 (THSP…APGL) and 532–571 (GAAA…VMAA). 2 stretches are compositionally biased toward low complexity: residues 373 to 393 (SSPE…NTVS) and 542 to 556 (SPPS…AATS). An interaction with PIAS1 region spans residues 558 to 605 (HVVQPKATSSVMAAPSTDGAMNLIKNKRNMTGYKTLPYPLKKQNGKIK). 4 consecutive C2H2-type zinc fingers follow at residues 606-628 (YECN…LRVH), 634-656 (FKCQ…YLVH), 662-684 (HECQ…LRLH), and 690-712 (YQCK…KRLH). A Glycyl lysine isopeptide (Lys-Gly) (interchain with G-Cter in SUMO1); alternate cross-link involves residue K847. Residue K847 forms a Glycyl lysine isopeptide (Lys-Gly) (interchain with G-Cter in SUMO2); alternate linkage.

This sequence belongs to the class V-like SAM-binding methyltransferase superfamily. In terms of assembly, interacts with PRMT5. Interacts with FBXO10. Interacts with FBXO11. Interacts with multiple nuclear sumoylation E3 ligases, including CBX4, PIAS1, PIAS2, PIAS3, PIAS4, PML and RNF4, but not RANBP2. Interacts with LDB1, SMARCD3 and SMARCC1. Interacts with EEIG1; following TNFSF11/RANKL stimulation in bone marrow-derived macrophages, the interaction promotes the binding of PRDM1/BLIMP1 to the gene promoter of IRF8. In terms of processing, sumoylation at Lys-847 by PIAS1 increases transcriptional repressor activity, and is critical for plasma cell differentiation. Can be sumoylated with SUMO1 and SUMO2 by PML. Degradation of the wild-type protein mostly depends upon sumoylation, rather than ubiquitination. Desumoylated by SENP1 and SENP6. Post-translationally, ubiquitinated by SCF(FBXO11), leading to its degradation by the proteasome. In terms of tissue distribution, expressed in bone marrow macrophages (at protein level). Expressed in innate lymphocytes, including tissue-resident conventional natural killer (cNK) cells in liver. Expressed also weakly in tissue-resident natural killer (trNK) and natural killer T (NKT) cells in liver. Expressed in bone marrow, spleen and lymph node but not in brain, heart, kidney, liver, ovary or muscle. Weak expression detected in the lung. As to expression, expressed only in the yolk sac. In terms of tissue distribution, expressed in embryo, yolk sac, placenta, splenocytes, and activated T-cells.

The protein localises to the nucleus. It localises to the cytoplasm. In terms of biological role, transcription factor that mediates a transcriptional program in various innate and adaptive immune tissue-resident lymphocyte T cell types such as tissue-resident memory T (Trm), natural killer (trNK) and natural killer T (NKT) cells and negatively regulates gene expression of proteins that promote the egress of tissue-resident T-cell populations from non-lymphoid organs. Plays a role in the development, retention and long-term establishment of adaptive and innate tissue-resident lymphocyte T cell types in non-lymphoid organs, such as the skin and gut, but also in other nonbarrier tissues like liver and kidney, and therefore may provide immediate immunological protection against reactivating infections or viral reinfection. Binds specifically to the PRDI element in the promoter of the beta-interferon gene. Drives the maturation of B-lymphocytes into Ig secreting cells. Associates with the transcriptional repressor ZNF683 to chromatin at gene promoter regions. Binds to the promoter and acts as a transcriptional repressor of IRF8, thereby promotes transcription of osteoclast differentiation factors such as NFATC1 and EEIG1. This Mus musculus (Mouse) protein is PR domain zinc finger protein 1 (Prdm1).